A 102-amino-acid polypeptide reads, in one-letter code: Large ribosomal subunit protein bL21 (102 aa).

This sequence belongs to the bacterial ribosomal protein bL21 family. As to quaternary structure, part of the 50S ribosomal subunit. Contacts protein L20.

Its function is as follows. This protein binds to 23S rRNA in the presence of protein L20. This chain is Large ribosomal subunit protein bL21, found in Lactiplantibacillus plantarum (strain ATCC BAA-793 / NCIMB 8826 / WCFS1) (Lactobacillus plantarum).